The chain runs to 379 residues: Cathepsin B-like cysteine proteinase 6 (379 aa).

The signal sequence occupies residues 1-16 (MKTLLFLSCIVVAAYC). Positions 17 to 104 (ACNDNLESVL…LSKTKDLDLD (88 aa)) are excised as a propeptide. 6 disulfide bridges follow: Cys-118–Cys-147, Cys-130–Cys-174, Cys-166–Cys-233, Cys-167–Cys-170, Cys-203–Cys-237, and Cys-211–Cys-223. Cys-133 is a catalytic residue. An N-linked (GlcNAc...) asparagine glycan is attached at Asn-196. Residue Asn-201 is glycosylated (N-linked (GlcNAc...) asparagine; atypical). Residues His-305 and Asn-325 contribute to the active site.

Belongs to the peptidase C1 family.

The sequence is that of Cathepsin B-like cysteine proteinase 6 (cpr-6) from Caenorhabditis elegans.